We begin with the raw amino-acid sequence, 524 residues long: Bifunctional purine biosynthesis protein PurH (524 aa).

The 149-residue stretch at 1–149 (MSDPLIKRAL…KNNESVTVLT (149 aa)) folds into the MGS-like domain.

This sequence belongs to the PurH family.

The catalysed reaction is (6R)-10-formyltetrahydrofolate + 5-amino-1-(5-phospho-beta-D-ribosyl)imidazole-4-carboxamide = 5-formamido-1-(5-phospho-D-ribosyl)imidazole-4-carboxamide + (6S)-5,6,7,8-tetrahydrofolate. The enzyme catalyses IMP + H2O = 5-formamido-1-(5-phospho-D-ribosyl)imidazole-4-carboxamide. Its pathway is purine metabolism; IMP biosynthesis via de novo pathway; 5-formamido-1-(5-phospho-D-ribosyl)imidazole-4-carboxamide from 5-amino-1-(5-phospho-D-ribosyl)imidazole-4-carboxamide (10-formyl THF route): step 1/1. It participates in purine metabolism; IMP biosynthesis via de novo pathway; IMP from 5-formamido-1-(5-phospho-D-ribosyl)imidazole-4-carboxamide: step 1/1. This chain is Bifunctional purine biosynthesis protein PurH, found in Chlorobium phaeovibrioides (strain DSM 265 / 1930) (Prosthecochloris vibrioformis (strain DSM 265)).